Here is a 75-residue protein sequence, read N- to C-terminus: Small ribosomal subunit protein bS18 (75 aa).

Belongs to the bacterial ribosomal protein bS18 family. In terms of assembly, part of the 30S ribosomal subunit. Forms a tight heterodimer with protein bS6.

Functionally, binds as a heterodimer with protein bS6 to the central domain of the 16S rRNA, where it helps stabilize the platform of the 30S subunit. The chain is Small ribosomal subunit protein bS18 from Photobacterium profundum (strain SS9).